Consider the following 201-residue polypeptide: 3-isopropylmalate dehydratase small subunit (201 aa).

It belongs to the LeuD family. LeuD type 1 subfamily. In terms of assembly, heterodimer of LeuC and LeuD.

The enzyme catalyses (2R,3S)-3-isopropylmalate = (2S)-2-isopropylmalate. It participates in amino-acid biosynthesis; L-leucine biosynthesis; L-leucine from 3-methyl-2-oxobutanoate: step 2/4. Catalyzes the isomerization between 2-isopropylmalate and 3-isopropylmalate, via the formation of 2-isopropylmaleate. In Shewanella oneidensis (strain ATCC 700550 / JCM 31522 / CIP 106686 / LMG 19005 / NCIMB 14063 / MR-1), this protein is 3-isopropylmalate dehydratase small subunit.